Here is a 229-residue protein sequence, read N- to C-terminus: MAKKSKQMRAALEKIDSTKAYSVEEAVALAQETNFAKFDATVEVSYNLNIDVKKADQQIRGAMVLPNGTGKTQRVLVFARGAKAEEAKAAGADFVGEDELVDKINGGWLDFDVVVATPDMMAIVGRLGRVLGPRNLMPNPKTGTVTMDVAKAVEESKGGKITYRADKAGNVQAIIGKVSFEAEKLVENFKAFNDAIQKAKPATAKGVYITNLSITTTQGPGIKVDPNSL.

Belongs to the universal ribosomal protein uL1 family. In terms of assembly, part of the 50S ribosomal subunit.

Its function is as follows. Binds directly to 23S rRNA. The L1 stalk is quite mobile in the ribosome, and is involved in E site tRNA release. Functionally, protein L1 is also a translational repressor protein, it controls the translation of the L11 operon by binding to its mRNA. This Streptococcus thermophilus (strain CNRZ 1066) protein is Large ribosomal subunit protein uL1.